The sequence spans 352 residues: Nicotinate-nucleotide--dimethylbenzimidazole phosphoribosyltransferase (352 aa).

Residue Glu318 is the Proton acceptor of the active site.

This sequence belongs to the CobT family.

It catalyses the reaction 5,6-dimethylbenzimidazole + nicotinate beta-D-ribonucleotide = alpha-ribazole 5'-phosphate + nicotinate + H(+). The protein operates within nucleoside biosynthesis; alpha-ribazole biosynthesis; alpha-ribazole from 5,6-dimethylbenzimidazole: step 1/2. In terms of biological role, catalyzes the synthesis of alpha-ribazole-5'-phosphate from nicotinate mononucleotide (NAMN) and 5,6-dimethylbenzimidazole (DMB). The chain is Nicotinate-nucleotide--dimethylbenzimidazole phosphoribosyltransferase from Dehalococcoides mccartyi (strain CBDB1).